Reading from the N-terminus, the 320-residue chain is Heterogeneous nuclear ribonucleoprotein A1 (320 aa).

Position 1 is an N-acetylmethionine (M1). Position 2 is an N-acetylserine; in Heterogeneous nuclear ribonucleoprotein A1, N-terminally processed (S2). S2 is subject to Phosphoserine. N6-acetyllysine; alternate is present on K3. K3 participates in a covalent cross-link: Glycyl lysine isopeptide (Lys-Gly) (interchain with G-Cter in SUMO2); alternate. Phosphoserine is present on residues S4 and S6. The tract at residues 4 to 94 (SESPKEPEQL…EPKRAVSRED (91 aa)) is globular A domain. Residue K8 forms a Glycyl lysine isopeptide (Lys-Gly) (interchain with G-Cter in SUMO2) linkage. 2 consecutive RRM domains span residues 14–97 (RKLF…DSQR) and 105–184 (KKIF…LSKQ). S22 carries the phosphoserine modification. K78 participates in a covalent cross-link: Glycyl lysine isopeptide (Lys-Gly) (interchain with G-Cter in SUMO2). The segment at 95-185 (SQRPGAHLTV…EVRKALSKQE (91 aa)) is globular B domain. K113 is covalently cross-linked (Glycyl lysine isopeptide (Lys-Gly) (interchain with G-Cter in SUMO)). Glycyl lysine isopeptide (Lys-Gly) (interchain with G-Cter in SUMO2) cross-links involve residues K179 and K183. Residues 182-216 (SKQEMASASSSQRGRSGSGNFGGGRGGGFGGNDNF) are disordered. Position 192 is a phosphoserine; by MKNK2 (S192). The residue at position 194 (R194) is an Asymmetric dimethylarginine; alternate. At R194 the chain carries Dimethylated arginine; alternate. Residue R194 is modified to Omega-N-methylarginine; alternate. A compositionally biased stretch (gly residues) spans 197–216 (SGSGNFGGGRGGGFGGNDNF). S199 is subject to Phosphoserine. Asymmetric dimethylarginine; alternate occurs at positions 206, 218, 225, and 232. Residue R206 is modified to Dimethylated arginine; alternate. An omega-N-methylarginine; alternate mark is found at R206, R218, R225, and R232. Positions 218–240 (RGGNFSGRGGFGGSRGGGGYGGS) are RNA-binding RGG-box. R225 is subject to Dimethylated arginine; alternate. Residues 268 to 305 (NQSSNFGPMKGGNFGGRSSGPYGGGGQYFAKPRNQGGY) are nuclear targeting sequence. The disordered stretch occupies residues 274-320 (GPMKGGNFGGRSSGPYGGGGQYFAKPRNQGGYGGSSSSSSYGSGRRF). A compositionally biased stretch (gly residues) spans 276 to 294 (MKGGNFGGRSSGPYGGGGQ). R284 carries the post-translational modification Omega-N-methylarginine. At S285 the chain carries Phosphoserine. Position 298 is an N6-acetyllysine; alternate (K298). K298 participates in a covalent cross-link: Glycyl lysine isopeptide (Lys-Gly) (interchain with G-Cter in SUMO2); alternate. R300 is modified (omega-N-methylarginine). Over residues 308-320 (SSSSSSYGSGRRF) the composition is skewed to low complexity. A Phosphoserine modification is found at S309. S310, S311, and S312 each carry phosphoserine; by MKNK2. 2 positions are modified to phosphoserine: S313 and S316. An Omega-N-methylarginine modification is found at R318.

Identified in the spliceosome C complex. Identified in a IGF2BP1-dependent mRNP granule complex containing untranslated mRNAs. Interacts with SEPT6. Interacts with C9orf72. Interacts with KHDRBS1. Interacts with UBQLN2. Interacts with PPIA/CYPA. Post-translationally, sumoylated.

It localises to the nucleus. The protein localises to the cytoplasm. Functionally, involved in the packaging of pre-mRNA into hnRNP particles, transport of poly(A) mRNA from the nucleus to the cytoplasm and modulation of splice site selection. Plays a role in the splicing of pyruvate kinase PKM by binding repressively to sequences flanking PKM exon 9, inhibiting exon 9 inclusion and resulting in exon 10 inclusion and production of the PKM M2 isoform. Binds to the IRES and thereby inhibits the translation of the apoptosis protease activating factor APAF1. May bind to specific miRNA hairpins. In Mus musculus (Mouse), this protein is Heterogeneous nuclear ribonucleoprotein A1 (Hnrnpa1).